The sequence spans 222 residues: Lipid transferase CIDEC (222 aa).

The segment covering 1–19 (MAMYTAVSTSVVTQQQLSE) has biased composition (polar residues). Disordered stretches follow at residues 1-33 (MAMY…CRVT) and 203-222 (EQPP…KMLQ). Positions 1–33 (MAMYTAVSTSVVTQQQLSEPSAEAPRARPCRVT) are required for liquid-liquid phase separation (LLPS). In terms of domain architecture, CIDE-N spans 26–103 (RARPCRVTTA…VLHKGQKWQP (78 aa)).

It belongs to the CIDE family. Homodimer. Homooligomer; undergoes liquid-liquid phase separation (LLPS) via its N-terminus, facilitating lipid droplet fusion, occurs at the lipid droplet contact sites. Interacts with CIDEA. Interacts with PLIN1. Interacts with NFAT5; this interaction is direct and retains NFAT5 in the cytoplasm. Interacts with CEBPB. Interacts with isoform CLSTN3beta of CLSTN3; inhibiting the lipid transferase activity of CIDEC. Ubiquitinated and targeted to proteasomal degradation, resulting in a short half-life (about 15 minutes in 3T3-L1 cells). Protein stability depends on triaclyglycerol synthesis, fatty acid availability and lipid droplet formation.

It localises to the lipid droplet. It is found in the endoplasmic reticulum. Its subcellular location is the nucleus. It catalyses the reaction a triacyl-sn-glycerol(in) = a triacyl-sn-glycerol(out). In terms of biological role, lipid transferase specifically expressed in white adipose tissue, which promotes unilocular lipid droplet formation by mediating lipid droplet fusion. Lipid droplet fusion promotes their enlargement, restricting lipolysis and favoring lipid storage. Localizes on the lipid droplet surface, at focal contact sites between lipid droplets, and mediates atypical lipid droplet fusion by undergoing liquid-liquid phase separation (LLPS) and promoting directional net neutral lipid transfer from the smaller to larger lipid droplets. The transfer direction may be driven by the internal pressure difference between the contacting lipid droplet pair. Its role in neutral lipid transfer and lipid droplet enlargement is activated by the interaction with PLIN1. May also act as a CEBPB coactivator in the white adipose tissue to control the expression of a subset of CEBPB downstream target genes, including SOCS1, SOCS3, TGFB1, TGFBR1, ID2 and XDH. When overexpressed in preadipocytes, induces apoptosis or increases cell susceptibility to apoptosis induced by serum deprivation or TGFB treatment. This Bos taurus (Bovine) protein is Lipid transferase CIDEC.